A 575-amino-acid chain; its full sequence is 2-isopropylmalate synthase (575 aa).

The Pyruvate carboxyltransferase domain maps to Pro-31–Ala-305. Positions 40, 244, 246, and 280 each coordinate Mg(2+). The interval Pro-437–Gly-575 is regulatory domain.

Belongs to the alpha-IPM synthase/homocitrate synthase family. LeuA type 2 subfamily. In terms of assembly, homodimer. The cofactor is Mg(2+).

It localises to the cytoplasm. The enzyme catalyses 3-methyl-2-oxobutanoate + acetyl-CoA + H2O = (2S)-2-isopropylmalate + CoA + H(+). Its pathway is amino-acid biosynthesis; L-leucine biosynthesis; L-leucine from 3-methyl-2-oxobutanoate: step 1/4. Functionally, catalyzes the condensation of the acetyl group of acetyl-CoA with 3-methyl-2-oxobutanoate (2-ketoisovalerate) to form 3-carboxy-3-hydroxy-4-methylpentanoate (2-isopropylmalate). This chain is 2-isopropylmalate synthase, found in Herbaspirillum seropedicae (strain SmR1).